Reading from the N-terminus, the 146-residue chain is Vascular endothelial growth factor isoform GtVF (146 aa).

An N-terminal signal peptide occupies residues 1-24 (MAAYLLAVAILFCIQGWPSGTVQG). At Q25 the chain carries Pyrrolidone carboxylic acid. Intrachain disulfides connect C38–C80, C69–C115, and C73–C117. The disordered stretch occupies residues 116–146 (ECRPRSRSGVDSGKRKRNPEEGEPRAKFPFV). Basic and acidic residues predominate over residues 133–146 (NPEEGEPRAKFPFV).

This sequence belongs to the PDGF/VEGF growth factor family. Snake venom VEGF subfamily. Homodimer; disulfide-linked. As to expression, expressed by the venom gland.

Its subcellular location is the secreted. In terms of biological role, snake venom VEGFs that may contribute to venom dispersion and prey subjugation by inducing vascular permeability and hypotension. This protein induces an increase in capillary permeability after intradermal injection, in a VEGFR-2 (KDR) dependent manner. In addition, it provokes a drastic hypotensive effect after intravenous injection. The hypotension is mediated by nitric oxide (NO), which is produced by VEGF-activated endothelium NO synthase. Also induces angiogenesis in vitro. Unlike other crotalid VEGFs, this protein probably interacts with VEGF receptor-2 (KDR). This is Vascular endothelial growth factor isoform GtVF from Gloydius tsushimaensis (Tsushima Island pitviper).